The primary structure comprises 185 residues: Ribosome-recycling factor (185 aa).

This sequence belongs to the RRF family.

It is found in the cytoplasm. In terms of biological role, responsible for the release of ribosomes from messenger RNA at the termination of protein biosynthesis. May increase the efficiency of translation by recycling ribosomes from one round of translation to another. This is Ribosome-recycling factor from Aliivibrio salmonicida (strain LFI1238) (Vibrio salmonicida (strain LFI1238)).